Consider the following 187-residue polypeptide: Sliding-clamp-loader small subunit (187 aa).

The protein belongs to the Tevenvirinae sliding-clamp-loader small subunit family. As to quaternary structure, the sliding-clamp-loader consists of 4 large subunits and 1 small subunit. Interacts with the sliding clamp; this interaction allows the sliding-clamp-loader to open the sliding clamp. Part of the replicase complex that includes the DNA polymerase, the polymerase clamp, the clamp loader complex, the single-stranded DNA binding protein, the primase, the helicase and the helicase assembly factor.

Functionally, forms the sliding-clamp-loader together with the small subunit. The clamp loader holds the clamp in an open conformation and places it onto the DNA. This chain is Sliding-clamp-loader small subunit (62), found in Escherichia coli (Bacteriophage T4).